The sequence spans 563 residues: Probable terpene synthase 4 (563 aa).

Mg(2+)-binding residues include Asp316, Asp320, and Glu469. A DDXXD motif motif is present at residues 316–320 (DDIFD).

The protein belongs to the terpene synthase family. It depends on Mg(2+) as a cofactor.

In terms of biological role, probable sesquiterpene synthase. This is Probable terpene synthase 4 (TPS4) from Ricinus communis (Castor bean).